The chain runs to 278 residues: 4-deoxy-L-threo-5-hexosulose-uronate ketol-isomerase (278 aa).

The Zn(2+) site is built by His196, His198, Glu203, and His245.

Belongs to the KduI family. In terms of assembly, homohexamer. Zn(2+) serves as cofactor.

The enzyme catalyses 5-dehydro-4-deoxy-D-glucuronate = 3-deoxy-D-glycero-2,5-hexodiulosonate. It functions in the pathway glycan metabolism; pectin degradation; 2-dehydro-3-deoxy-D-gluconate from pectin: step 4/5. In terms of biological role, catalyzes the isomerization of 5-dehydro-4-deoxy-D-glucuronate to 3-deoxy-D-glycero-2,5-hexodiulosonate. The polypeptide is 4-deoxy-L-threo-5-hexosulose-uronate ketol-isomerase (Escherichia coli (strain K12 / MC4100 / BW2952)).